The chain runs to 406 residues: Tryptophan synthase beta chain (406 aa).

The residue at position 95 (Lys-95) is an N6-(pyridoxal phosphate)lysine.

It belongs to the TrpB family. In terms of assembly, tetramer of two alpha and two beta chains. It depends on pyridoxal 5'-phosphate as a cofactor.

It catalyses the reaction (1S,2R)-1-C-(indol-3-yl)glycerol 3-phosphate + L-serine = D-glyceraldehyde 3-phosphate + L-tryptophan + H2O. It participates in amino-acid biosynthesis; L-tryptophan biosynthesis; L-tryptophan from chorismate: step 5/5. Functionally, the beta subunit is responsible for the synthesis of L-tryptophan from indole and L-serine. The protein is Tryptophan synthase beta chain of Pseudomonas fluorescens (strain ATCC BAA-477 / NRRL B-23932 / Pf-5).